An 805-amino-acid chain; its full sequence is Rho GTPase-activating protein 42 (805 aa).

The BAR domain occupies 7–262 (EFSDSFLDSP…IRSAEQDFKA (256 aa)). A coiled-coil region spans residues 225–262 (KQQLQFNLQNTRNNFESTRQEVENLMRRIRSAEQDFKA). One can recognise a PH domain in the interval 265–374 (QWTMEGFLYV…WMEAMDGKEP (110 aa)). The 197-residue stretch at 376 to 572 (YTLPALLSKK…ILIENYDKIF (197 aa)) folds into the Rho-GAP domain. Disordered regions lie at residues 576–600 (PDPN…RSKA), 625–725 (SDTF…SELL), and 765–805 (VSRS…PGSV). A compositionally biased stretch (low complexity) spans 626-654 (DTFSSSPSSTPMGSMESLSSHSSEQNSCS). Residues 670–693 (LCWTTPSPSTNGPKSPACTTSPDS) are compositionally biased toward polar residues. The segment covering 694 to 704 (SSKEDANKTDG) has biased composition (basic and acidic residues). Over residues 710–721 (LSTSPGDRSSPA) the composition is skewed to polar residues. Residues 782–793 (PPKDGMRFRDDS) are compositionally biased toward basic and acidic residues.

May influence blood pressure by functioning as a GTPase-activating protein in vascular smooth muscle. In Danio rerio (Zebrafish), this protein is Rho GTPase-activating protein 42.